A 370-amino-acid chain; its full sequence is Chaperone protein DnaJ (370 aa).

The region spanning aspartate 5–glycine 70 is the J domain. A CR-type zinc finger spans residues glycine 134–glutamine 212. Zn(2+) is bound by residues cysteine 147, cysteine 150, cysteine 164, cysteine 167, cysteine 186, cysteine 189, cysteine 200, and cysteine 203. 4 CXXCXGXG motif repeats span residues cysteine 147–glycine 154, cysteine 164–glycine 171, cysteine 186–glycine 193, and cysteine 200–glycine 207. Residues aspartate 351–aspartate 370 are disordered.

Belongs to the DnaJ family. Homodimer. Requires Zn(2+) as cofactor.

It localises to the cytoplasm. Participates actively in the response to hyperosmotic and heat shock by preventing the aggregation of stress-denatured proteins and by disaggregating proteins, also in an autonomous, DnaK-independent fashion. Unfolded proteins bind initially to DnaJ; upon interaction with the DnaJ-bound protein, DnaK hydrolyzes its bound ATP, resulting in the formation of a stable complex. GrpE releases ADP from DnaK; ATP binding to DnaK triggers the release of the substrate protein, thus completing the reaction cycle. Several rounds of ATP-dependent interactions between DnaJ, DnaK and GrpE are required for fully efficient folding. Also involved, together with DnaK and GrpE, in the DNA replication of plasmids through activation of initiation proteins. The chain is Chaperone protein DnaJ from Acinetobacter baumannii (strain AB0057).